A 388-amino-acid polypeptide reads, in one-letter code: P2X purinoceptor 4 (388 aa).

Residues 1 to 33 (MAGCCSVLGSFLFEYDTPRIVLIRSRKVGLMNR) are Cytoplasmic-facing. Residues 34–54 (VVQLLILAYVIGWVFVWEKGY) traverse the membrane as a helical segment. Residues 55–338 (QETDSVVSSV…KFDIIPTMIN (284 aa)) are Extracellular-facing. K67 and K69 together coordinate ATP. CTP contacts are provided by K67 and K69. N75, N110, N131, N153, and N184 each carry an N-linked (GlcNAc...) asparagine glycan. Cystine bridges form between C116–C165, C126–C149, and C132–C159. T186 and L188 together coordinate ATP. T186 is a CTP binding site. Residues N199 and N208 are each glycosylated (N-linked (GlcNAc...) asparagine). 2 cysteine pairs are disulfide-bonded: C217/C227 and C261/C270. ATP-binding residues include N293, R295, and K313. CTP-binding residues include N293, R295, and K313. A helical membrane pass occupies residues 339–359 (VGSGLALLGVATVLCDVIVLY). At 360 to 388 (CMKKRYYYRDKKYKYVEDYEQGLSGEMNQ) the chain is on the cytoplasmic side.

Belongs to the P2X receptor family. Functional P2RXs are organized as homomeric and heteromeric trimers. Functional P2XRs are organized as homomeric and heteromeric trimers. Forms heterotrimer with P2RX1. Interacts with P2RX7 (via C-terminus); this interaction is functional only in the presence of ATP. Forms heterotrimer with P2RX4; functional differences between homomeric P2RX4 and P2RX4/6 heterotrimer are minor. Interacts with AP1M2.

It is found in the cell membrane. It localises to the lysosome membrane. The catalysed reaction is K(+)(in) = K(+)(out). It carries out the reaction Na(+)(in) = Na(+)(out). The enzyme catalyses Ca(2+)(in) = Ca(2+)(out). With respect to regulation, activated by ATP. pH-dependent and inhibited by acidic pH. ATP-gated nonselective transmembrane cation channel permeable to potassium, sodium and calcium. CTP, but not GTP or UTP, functions as a weak affinity agonist for P2RX4. Activated by extracellularly released ATP, it plays multiple role in immunity and central nervous system physiology. Plays a key role in initial steps of T-cell activation and Ca(2+) microdomain formation. Also participates in basal T-cell activity without TCR/CD3 stimulation. Promotes the differentiation and activation of Th17 cells via expression of retinoic acid-related orphan receptor C/RORC. Upon activation, drives microglia motility via the PI3K/Akt pathway. Could also function as an ATP-gated cation channel of lysosomal membranes. This is P2X purinoceptor 4 (P2rx4) from Mus musculus (Mouse).